The chain runs to 162 residues: 3-isopropylmalate dehydratase small subunit (162 aa).

The protein belongs to the LeuD family. LeuD type 2 subfamily. As to quaternary structure, heterodimer of LeuC and LeuD.

The enzyme catalyses (2R,3S)-3-isopropylmalate = (2S)-2-isopropylmalate. It functions in the pathway amino-acid biosynthesis; L-leucine biosynthesis; L-leucine from 3-methyl-2-oxobutanoate: step 2/4. Its function is as follows. Catalyzes the isomerization between 2-isopropylmalate and 3-isopropylmalate, via the formation of 2-isopropylmaleate. This Pyrobaculum neutrophilum (strain DSM 2338 / JCM 9278 / NBRC 100436 / V24Sta) (Thermoproteus neutrophilus) protein is 3-isopropylmalate dehydratase small subunit.